Here is a 396-residue protein sequence, read N- to C-terminus: Putative glycosyltransferase HOC1 (396 aa).

Over 2–13 (AKTTKRASSFRR) the chain is Cytoplasmic. Residues 14 to 34 (LMIFAIIALISLAFGVRYLFH) traverse the membrane as a helical; Signal-anchor for type II membrane protein segment. The Lumenal segment spans residues 35-396 (NSNATDLQKI…WKNTPKVEQK (362 aa)). A glycan (N-linked (GlcNAc...) asparagine) is linked at Asn-37.

It belongs to the glycosyltransferase 32 family. As to quaternary structure, component of the M-Pol II complex composed of ANP1, MNN9, MNN10, MNN11 and HOC1.

It is found in the golgi apparatus. Its subcellular location is the cis-Golgi network membrane. Functionally, the M-Pol II complex possesses alpha-1,6-mannosyltransferase activity and is probably involved in the elongation of the mannan backbone of N-linked glycans on cell wall and periplasmic proteins. This is Putative glycosyltransferase HOC1 (HOC1) from Saccharomyces cerevisiae (strain ATCC 204508 / S288c) (Baker's yeast).